The chain runs to 283 residues: Thymidylate synthase (283 aa).

A dUMP-binding site is contributed by Arg22. Cys160 serves as the catalytic Nucleophile. DUMP-binding positions include 180–183 (RSCD), Asn191, and 221–223 (HIY). Position 183 (Asp183) interacts with (6R)-5,10-methylene-5,6,7,8-tetrahydrofolate. Position 282 (Ser282) interacts with (6R)-5,10-methylene-5,6,7,8-tetrahydrofolate.

This sequence belongs to the thymidylate synthase family. Bacterial-type ThyA subfamily. Homodimer.

It localises to the cytoplasm. The enzyme catalyses dUMP + (6R)-5,10-methylene-5,6,7,8-tetrahydrofolate = 7,8-dihydrofolate + dTMP. Its pathway is pyrimidine metabolism; dTTP biosynthesis. Catalyzes the reductive methylation of 2'-deoxyuridine-5'-monophosphate (dUMP) to 2'-deoxythymidine-5'-monophosphate (dTMP) while utilizing 5,10-methylenetetrahydrofolate (mTHF) as the methyl donor and reductant in the reaction, yielding dihydrofolate (DHF) as a by-product. This enzymatic reaction provides an intracellular de novo source of dTMP, an essential precursor for DNA biosynthesis. The polypeptide is Thymidylate synthase (Shewanella halifaxensis (strain HAW-EB4)).